Here is a 235-residue protein sequence, read N- to C-terminus: Small ribosomal subunit protein uS2 (235 aa).

Belongs to the universal ribosomal protein uS2 family.

The polypeptide is Small ribosomal subunit protein uS2 (Caldanaerobacter subterraneus subsp. tengcongensis (strain DSM 15242 / JCM 11007 / NBRC 100824 / MB4) (Thermoanaerobacter tengcongensis)).